The following is a 333-amino-acid chain: D-fructose 1,6-bisphosphatase class 2/sedoheptulose 1,7-bisphosphatase (333 aa).

Positions 33, 57, 85, and 88 each coordinate Mn(2+). Residues 88-90 (EGT), tyrosine 119, 164-166 (RAR), and 186-188 (DGD) contribute to the substrate site. Residue glutamate 213 participates in Mn(2+) binding.

This sequence belongs to the FBPase class 2 family. In terms of assembly, homotetramer. It depends on Mn(2+) as a cofactor.

The catalysed reaction is beta-D-fructose 1,6-bisphosphate + H2O = beta-D-fructose 6-phosphate + phosphate. It catalyses the reaction D-sedoheptulose 1,7-bisphosphate + H2O = D-sedoheptulose 7-phosphate + phosphate. The protein operates within carbohydrate biosynthesis; Calvin cycle. Catalyzes the hydrolysis of fructose 1,6-bisphosphate (Fru 1,6-P2) and sedoheptulose 1,7-bisphosphate (Sed 1,7-P2) to fructose 6-phosphate and sedoheptulose 7-phosphate, respectively. The sequence is that of D-fructose 1,6-bisphosphatase class 2/sedoheptulose 1,7-bisphosphatase from Prochlorococcus marinus subsp. pastoris (strain CCMP1986 / NIES-2087 / MED4).